A 240-amino-acid polypeptide reads, in one-letter code: Protein GUCD1 (240 aa).

In Homo sapiens (Human), this protein is Protein GUCD1 (GUCD1).